The primary structure comprises 102 residues: Nucleoid-associated protein WS1681 (102 aa).

This sequence belongs to the YbaB/EbfC family. In terms of assembly, homodimer.

It is found in the cytoplasm. The protein localises to the nucleoid. Its function is as follows. Binds to DNA and alters its conformation. May be involved in regulation of gene expression, nucleoid organization and DNA protection. This chain is Nucleoid-associated protein WS1681, found in Wolinella succinogenes (strain ATCC 29543 / DSM 1740 / CCUG 13145 / JCM 31913 / LMG 7466 / NCTC 11488 / FDC 602W) (Vibrio succinogenes).